A 440-amino-acid polypeptide reads, in one-letter code: Thymidine phosphorylase (440 aa).

Belongs to the thymidine/pyrimidine-nucleoside phosphorylase family. In terms of assembly, homodimer.

The catalysed reaction is thymidine + phosphate = 2-deoxy-alpha-D-ribose 1-phosphate + thymine. The protein operates within pyrimidine metabolism; dTMP biosynthesis via salvage pathway; dTMP from thymine: step 1/2. Functionally, the enzymes which catalyze the reversible phosphorolysis of pyrimidine nucleosides are involved in the degradation of these compounds and in their utilization as carbon and energy sources, or in the rescue of pyrimidine bases for nucleotide synthesis. The polypeptide is Thymidine phosphorylase (Salmonella agona (strain SL483)).